Here is a 388-residue protein sequence, read N- to C-terminus: Pentatricopeptide repeat-containing protein 2, mitochondrial (388 aa).

Residues 166–200 (TSFNILMDMLFIKGKYKSALQVLIEMKNQDVKFTK) form a PPR repeat. Position 382 is a phosphoserine (Ser-382).

This sequence belongs to the PTCD2 family.

The protein localises to the mitochondrion. Functionally, involved in mitochondrial RNA maturation and mitochondrial respiratory chain function. This is Pentatricopeptide repeat-containing protein 2, mitochondrial (PTCD2) from Homo sapiens (Human).